Here is a 760-residue protein sequence, read N- to C-terminus: ATP-dependent DNA helicase Hel308 (760 aa).

Residues Gln-28 and 46–53 (IPTASGKT) contribute to the ATP site. The 167-residue stretch at 33–199 (EMGLLEKKNL…WLGAALVLSE (167 aa)) folds into the Helicase ATP-binding domain. The short motif at 144 to 147 (DEIH) is the DEAH box element. The Helicase C-terminal domain occupies 232–426 (AVNLVLDTIK…SKLGTENALR (195 aa)).

Belongs to the helicase family. Hel308 subfamily. Monomer.

The enzyme catalyses Couples ATP hydrolysis with the unwinding of duplex DNA by translocating in the 3'-5' direction.. It catalyses the reaction ATP + H2O = ADP + phosphate + H(+). DNA-dependent ATPase and 3'-5' DNA helicase that may be involved in repair of stalled replication forks. The chain is ATP-dependent DNA helicase Hel308 from Methanococcoides burtonii (strain DSM 6242 / NBRC 107633 / OCM 468 / ACE-M).